The sequence spans 259 residues: 5'-nucleotidase SurE (259 aa).

Aspartate 8, aspartate 9, serine 39, and asparagine 98 together coordinate a divalent metal cation.

It belongs to the SurE nucleotidase family. A divalent metal cation is required as a cofactor.

The protein resides in the cytoplasm. It carries out the reaction a ribonucleoside 5'-phosphate + H2O = a ribonucleoside + phosphate. Functionally, nucleotidase that shows phosphatase activity on nucleoside 5'-monophosphates. The protein is 5'-nucleotidase SurE of Fervidobacterium nodosum (strain ATCC 35602 / DSM 5306 / Rt17-B1).